Reading from the N-terminus, the 103-residue chain is Iron-sulfur cluster assembly protein CyaY (103 aa).

Belongs to the frataxin family.

Its function is as follows. Involved in iron-sulfur (Fe-S) cluster assembly. May act as a regulator of Fe-S biogenesis. In Rickettsia rickettsii (strain Iowa), this protein is Iron-sulfur cluster assembly protein CyaY.